The following is a 301-amino-acid chain: NAD kinase (301 aa).

D84 acts as the Proton acceptor in catalysis. NAD(+) is bound by residues 84–85 (DG), R89, 158–159 (NE), K169, N188, 199–204 (TAYSFS), and Q258.

It belongs to the NAD kinase family. It depends on a divalent metal cation as a cofactor.

It localises to the cytoplasm. It carries out the reaction NAD(+) + ATP = ADP + NADP(+) + H(+). Involved in the regulation of the intracellular balance of NAD and NADP, and is a key enzyme in the biosynthesis of NADP. Catalyzes specifically the phosphorylation on 2'-hydroxyl of the adenosine moiety of NAD to yield NADP. The sequence is that of NAD kinase from Tropheryma whipplei (strain Twist) (Whipple's bacillus).